The sequence spans 331 residues: Terpene synthase 8 (331 aa).

The DDxx(x)D/E motif signature appears at 97–102 (DDFYLE). The short motif at 228-236 (NDIYSFNKE) is the NDxxSxxxD/E motif element.

The protein belongs to the terpene synthase family.

Functionally, terpene synthase that converts its substrate farnesyl diphosphate (FPP) into several yet unidentified sesquiterpenes. The chain is Terpene synthase 8 from Dictyostelium purpureum (Slime mold).